Reading from the N-terminus, the 1464-residue chain is Bridge-like lipid transfer protein family member 3B (1464 aa).

The Chorein N-terminal domain occupies 3 to 94 (GIIKKQILKH…DKVIMEMSTC (92 aa)). Disordered regions lie at residues 267–297 (STEQ…TQTS) and 409–436 (DHNV…YPLK). Positions 278–297 (PTQSSTVVASAQQVKTTQTS) are enriched in polar residues. A phosphoserine mark is found at S414, S418, S774, S935, and S1009. Disordered stretches follow at residues 1066–1089 (SKEE…PKER), 1164–1183 (LQNY…EGAQ), and 1392–1413 (QRSV…QSAN). Composition is skewed to polar residues over residues 1164-1182 (LQNY…SEGA) and 1394-1413 (SVTQ…QSAN). A coiled-coil region spans residues 1418–1456 (SFDFTREQLMEENESLKQELAKAKMALAEAHLEKDALLH).

Monomer. Homodimer (via N-terminus). Associates with the Golgi-associated retrograde protein (GARP) complex. Interacts with GARP complex component VPS52. Interacts (via C-terminal coiled-coil domain) with STX6.

It is found in the cytoplasm. It localises to the cytosol. The protein localises to the early endosome. In terms of biological role, tube-forming lipid transport protein which mediates the transfer of lipids between membranes at organelle contact sites. Required for retrograde traffic of vesicle clusters in the early endocytic pathway to the Golgi complex. The polypeptide is Bridge-like lipid transfer protein family member 3B (Homo sapiens (Human)).